The chain runs to 68 residues: Small proline-rich protein 2K (68 aa).

One copy of the 1; truncated repeat lies at 21–26 (PKPCSP). The segment at 21 to 65 (PKPCSPPKCPEPCPPPKCPETCPPQPCQRKCPPVLEAPCQQKCPS) is 3.5 X 9 AA approximate tandem repeats. A run of 3 repeats spans residues 27-35 (PKCPEPCPP), 36-44 (PKCPETCPP), and 45-53 (QPCQRKCPP).

This sequence belongs to the cornifin (SPRR) family. In terms of tissue distribution, not expressed in uterus.

Its subcellular location is the cytoplasm. Functionally, cross-linked envelope protein of keratinocytes. It is a keratinocyte protein that first appears in the cell cytosol, but ultimately becomes cross-linked to membrane proteins by transglutaminase. All that results in the formation of an insoluble envelope beneath the plasma membrane. The sequence is that of Small proline-rich protein 2K (Sprr2k) from Mus musculus (Mouse).